A 601-amino-acid chain; its full sequence is NADPH--cytochrome P450 reductase (601 aa).

Residues I25–W169 form the Flavodoxin-like domain. FMN contacts are provided by residues S31 to G36, A83 to G86, L118 to N127, and D153. The FAD-binding FR-type domain maps to K224 to T425. FAD is bound by residues R399–S402, C417–V419, Y423, and G427–T430. NADP(+)-binding positions include T458, S519–R520, K525–Q529, and D562. W600 provides a ligand contact to FAD.

The protein belongs to the NADPH--cytochrome P450 reductase family. This sequence in the N-terminal section; belongs to the flavodoxin family. In the C-terminal section; belongs to the flavoprotein pyridine nucleotide cytochrome reductase family. Requires FAD as cofactor. FMN serves as cofactor.

The protein localises to the endoplasmic reticulum membrane. It carries out the reaction 2 oxidized [cytochrome P450] + NADPH = 2 reduced [cytochrome P450] + NADP(+) + H(+). Its function is as follows. This enzyme is required for electron transfer from NADP to cytochrome P450 in microsomes. It can also provide electron transfer to heme oxygenase and cytochrome B5. The sequence is that of NADPH--cytochrome P450 reductase from Salmo trutta (Brown trout).